A 170-amino-acid polypeptide reads, in one-letter code: Peptide deformylase (170 aa).

Positions 94 and 136 each coordinate Fe cation. E137 is an active-site residue. Residue H140 coordinates Fe cation.

The protein belongs to the polypeptide deformylase family. Requires Fe(2+) as cofactor.

It catalyses the reaction N-terminal N-formyl-L-methionyl-[peptide] + H2O = N-terminal L-methionyl-[peptide] + formate. In terms of biological role, removes the formyl group from the N-terminal Met of newly synthesized proteins. Requires at least a dipeptide for an efficient rate of reaction. N-terminal L-methionine is a prerequisite for activity but the enzyme has broad specificity at other positions. This Agrobacterium fabrum (strain C58 / ATCC 33970) (Agrobacterium tumefaciens (strain C58)) protein is Peptide deformylase.